We begin with the raw amino-acid sequence, 290 residues long: 4-hydroxy-tetrahydrodipicolinate synthase (290 aa).

Pyruvate is bound at residue T48. The active-site Proton donor/acceptor is the Y137. K165 functions as the Schiff-base intermediate with substrate in the catalytic mechanism. I206 is a pyruvate binding site.

The protein belongs to the DapA family. As to quaternary structure, homotetramer; dimer of dimers.

The protein localises to the cytoplasm. The catalysed reaction is L-aspartate 4-semialdehyde + pyruvate = (2S,4S)-4-hydroxy-2,3,4,5-tetrahydrodipicolinate + H2O + H(+). The protein operates within amino-acid biosynthesis; L-lysine biosynthesis via DAP pathway; (S)-tetrahydrodipicolinate from L-aspartate: step 3/4. Catalyzes the condensation of (S)-aspartate-beta-semialdehyde [(S)-ASA] and pyruvate to 4-hydroxy-tetrahydrodipicolinate (HTPA). In Ligilactobacillus salivarius (strain UCC118) (Lactobacillus salivarius), this protein is 4-hydroxy-tetrahydrodipicolinate synthase.